The sequence spans 399 residues: Bifunctional enzyme IspD/IspF (399 aa).

The interval 1–239 (MHTWALLLAA…SSEKKNMQVP (239 aa)) is 2-C-methyl-D-erythritol 4-phosphate cytidylyltransferase. The segment at 240–399 (CVGWGYDVHR…AVTALRRVSS (160 aa)) is 2-C-methyl-D-erythritol 2,4-cyclodiphosphate synthase. 2 residues coordinate a divalent metal cation: Asp246 and His248. Residues 246-248 (DVH) and 273-274 (HS) each bind 4-CDP-2-C-methyl-D-erythritol 2-phosphate. His281 is an a divalent metal cation binding site. Residues 295 to 297 (DIG), 300 to 304 (FPDTD), 371 to 374 (TTEE), and Phe378 contribute to the 4-CDP-2-C-methyl-D-erythritol 2-phosphate site.

This sequence in the N-terminal section; belongs to the IspD/TarI cytidylyltransferase family. IspD subfamily. The protein in the C-terminal section; belongs to the IspF family. It depends on a divalent metal cation as a cofactor.

The enzyme catalyses 2-C-methyl-D-erythritol 4-phosphate + CTP + H(+) = 4-CDP-2-C-methyl-D-erythritol + diphosphate. It catalyses the reaction 4-CDP-2-C-methyl-D-erythritol 2-phosphate = 2-C-methyl-D-erythritol 2,4-cyclic diphosphate + CMP. Its pathway is isoprenoid biosynthesis; isopentenyl diphosphate biosynthesis via DXP pathway; isopentenyl diphosphate from 1-deoxy-D-xylulose 5-phosphate: step 2/6. It participates in isoprenoid biosynthesis; isopentenyl diphosphate biosynthesis via DXP pathway; isopentenyl diphosphate from 1-deoxy-D-xylulose 5-phosphate: step 4/6. In terms of biological role, bifunctional enzyme that catalyzes the formation of 4-diphosphocytidyl-2-C-methyl-D-erythritol from CTP and 2-C-methyl-D-erythritol 4-phosphate (MEP) (IspD), and catalyzes the conversion of 4-diphosphocytidyl-2-C-methyl-D-erythritol 2-phosphate (CDP-ME2P) to 2-C-methyl-D-erythritol 2,4-cyclodiphosphate (ME-CPP) with a corresponding release of cytidine 5-monophosphate (CMP) (IspF). The sequence is that of Bifunctional enzyme IspD/IspF from Oleidesulfovibrio alaskensis (strain ATCC BAA-1058 / DSM 17464 / G20) (Desulfovibrio alaskensis).